Consider the following 225-residue polypeptide: Thymocyte nuclear protein 1 (225 aa).

The disordered stretch occupies residues 1–47; it reads MSRPRKRLAGTSGSDKGLSGKRTKTENSGEALAKVEDSNPQKTSATK. The Nuclear localization signal signature appears at 5-10; sequence RKRLAG. A compositionally biased stretch (basic and acidic residues) spans 23 to 39; that stretch reads TKTENSGEALAKVEDSN.

In terms of processing, phosphorylated.

It is found in the nucleus. Functionally, specifically binds 5-hydroxymethylcytosine (5hmC), suggesting that it acts as a specific reader of 5hmC. The protein is Thymocyte nuclear protein 1 (THYN1) of Homo sapiens (Human).